A 492-amino-acid polypeptide reads, in one-letter code: Bifunctional purine biosynthesis protein PurH (492 aa).

The MGS-like domain occupies 1 to 144 (MKKAILSVSN…KNYKHVTTIV (144 aa)).

It belongs to the PurH family.

It catalyses the reaction (6R)-10-formyltetrahydrofolate + 5-amino-1-(5-phospho-beta-D-ribosyl)imidazole-4-carboxamide = 5-formamido-1-(5-phospho-D-ribosyl)imidazole-4-carboxamide + (6S)-5,6,7,8-tetrahydrofolate. The enzyme catalyses IMP + H2O = 5-formamido-1-(5-phospho-D-ribosyl)imidazole-4-carboxamide. It functions in the pathway purine metabolism; IMP biosynthesis via de novo pathway; 5-formamido-1-(5-phospho-D-ribosyl)imidazole-4-carboxamide from 5-amino-1-(5-phospho-D-ribosyl)imidazole-4-carboxamide (10-formyl THF route): step 1/1. Its pathway is purine metabolism; IMP biosynthesis via de novo pathway; IMP from 5-formamido-1-(5-phospho-D-ribosyl)imidazole-4-carboxamide: step 1/1. The sequence is that of Bifunctional purine biosynthesis protein PurH from Staphylococcus aureus (strain MSSA476).